The following is a 365-amino-acid chain: Phospho-N-acetylmuramoyl-pentapeptide-transferase (365 aa).

10 helical membrane passes run 2 to 22 (ISLIIGIMVSLVVTIVGTPLL), 51 to 71 (TLGGVVINLAVVLGWCSSALY), 80 to 100 (PSWSAVLVLFAMLSMGFLGFI), 118 to 138 (GKFIGQFILATIYAVLALILP), 167 to 187 (VAIVLFVIWVNFLMTAWTNAI), 196 to 216 (LAAGSSMIAFIGYAIIAFWEF), 234 to 254 (PLDLTIIAACAAVACFGFLWY), 256 to 276 (SNPASIFMGDTGSLALGGLFA), 277 to 297 (AMSIATHTEFLAIILGGLFVI), and 340 to 360 (FWMIEMLFVLIALVLFYGDWV).

Belongs to the glycosyltransferase 4 family. MraY subfamily. Requires Mg(2+) as cofactor.

The protein resides in the cell membrane. It carries out the reaction UDP-N-acetyl-alpha-D-muramoyl-L-alanyl-gamma-D-glutamyl-meso-2,6-diaminopimeloyl-D-alanyl-D-alanine + di-trans,octa-cis-undecaprenyl phosphate = di-trans,octa-cis-undecaprenyl diphospho-N-acetyl-alpha-D-muramoyl-L-alanyl-D-glutamyl-meso-2,6-diaminopimeloyl-D-alanyl-D-alanine + UMP. Its pathway is cell wall biogenesis; peptidoglycan biosynthesis. Its function is as follows. Catalyzes the initial step of the lipid cycle reactions in the biosynthesis of the cell wall peptidoglycan: transfers peptidoglycan precursor phospho-MurNAc-pentapeptide from UDP-MurNAc-pentapeptide onto the lipid carrier undecaprenyl phosphate, yielding undecaprenyl-pyrophosphoryl-MurNAc-pentapeptide, known as lipid I. The polypeptide is Phospho-N-acetylmuramoyl-pentapeptide-transferase (Bifidobacterium adolescentis (strain ATCC 15703 / DSM 20083 / NCTC 11814 / E194a)).